Here is a 281-residue protein sequence, read N- to C-terminus: Ribosomal protein L11 methyltransferase (281 aa).

T133, G154, D175, and N216 together coordinate S-adenosyl-L-methionine.

This sequence belongs to the methyltransferase superfamily. PrmA family.

The protein resides in the cytoplasm. It carries out the reaction L-lysyl-[protein] + 3 S-adenosyl-L-methionine = N(6),N(6),N(6)-trimethyl-L-lysyl-[protein] + 3 S-adenosyl-L-homocysteine + 3 H(+). In terms of biological role, methylates ribosomal protein L11. This chain is Ribosomal protein L11 methyltransferase, found in Campylobacter jejuni subsp. jejuni serotype O:2 (strain ATCC 700819 / NCTC 11168).